A 698-amino-acid polypeptide reads, in one-letter code: Ubiquitin-like modifier-activating enzyme ATG7 (698 aa).

Positions 11 to 13 (FAP) match the FAP motif motif. Lysine 41 participates in a covalent cross-link: Glycyl lysine isopeptide (Lys-Gly) (interchain with G-Cter in ubiquitin). Cysteine 567 serves as the catalytic Glycyl thioester intermediate. Position 693 is a phosphoserine (serine 693).

It belongs to the ATG7 family. In terms of assembly, homodimer. Interacts with ATG3; this interaction is essential for the transfer of ATG8-like proteins's thioester from ATG7 to ATG3 and plays a role in the conjugation of ATG12 to ATG5. Interacts with ATG12. Forms intermediate conjugates with GABARAPL1. Forms intermediate conjugates with ATG8-like proteins such as GABARAP, GABARAPL2 or MAP1LC3A. Interacts with EP300 acetyltransferase. Interacts with FOXO1. In terms of processing, acetylated by EP300. Post-translationally, polyubiquitinated on Lys-41 via 'Lys-63'-linked ubiquitin by TRIM32; this modification positiely regulates ATG8 and ATG12 activating enzyme activity leading to initiation of autophagy under metabolic stress. In terms of tissue distribution, widely expressed.

The protein localises to the cytoplasm. The protein resides in the preautophagosomal structure. E1-like activating enzyme involved in the 2 ubiquitin-like systems required for cytoplasm to vacuole transport (Cvt) and autophagy. Activates ATG12 for its conjugation with ATG5 as well as the ATG8 family proteins for their conjugation with phosphatidylethanolamine. Both systems are needed for the ATG8 association to Cvt vesicles and autophagosomes membranes. Required for autophagic death induced by caspase-8 inhibition. Facilitates LC3-I lipidation with phosphatidylethanolamine to form LC3-II which is found on autophagosomal membranes. Required for mitophagy which contributes to regulate mitochondrial quantity and quality by eliminating the mitochondria to a basal level to fulfill cellular energy requirements and preventing excess ROS production. Modulates p53/TP53 activity to regulate cell cycle and survival during metabolic stress. Also plays a key role in the maintenance of axonal homeostasis, the prevention of axonal degeneration, the maintenance of hematopoietic stem cells, the formation of Paneth cell granules, as well as in adipose differentiation. Plays a role in regulating the liver clock and glucose metabolism by mediating the autophagic degradation of CRY1 (clock repressor) in a time-dependent manner. The chain is Ubiquitin-like modifier-activating enzyme ATG7 from Rattus norvegicus (Rat).